The sequence spans 365 residues: Histidinol-phosphate aminotransferase (365 aa).

Position 221 is an N6-(pyridoxal phosphate)lysine (Lys221).

This sequence belongs to the class-II pyridoxal-phosphate-dependent aminotransferase family. Histidinol-phosphate aminotransferase subfamily. Homodimer. Pyridoxal 5'-phosphate serves as cofactor.

The catalysed reaction is L-histidinol phosphate + 2-oxoglutarate = 3-(imidazol-4-yl)-2-oxopropyl phosphate + L-glutamate. Its pathway is amino-acid biosynthesis; L-histidine biosynthesis; L-histidine from 5-phospho-alpha-D-ribose 1-diphosphate: step 7/9. The protein is Histidinol-phosphate aminotransferase of Nitrobacter hamburgensis (strain DSM 10229 / NCIMB 13809 / X14).